The following is a 715-amino-acid chain: Fatty acid oxidation complex subunit alpha (715 aa).

The enoyl-CoA hydratase stretch occupies residues Met-1–Pro-190. Residues Gly-306 to Asn-715 form a 3-hydroxyacyl-CoA dehydrogenase region.

It in the N-terminal section; belongs to the enoyl-CoA hydratase/isomerase family. The protein in the central section; belongs to the 3-hydroxyacyl-CoA dehydrogenase family. As to quaternary structure, heterotetramer of two alpha chains (FadJ) and two beta chains (FadI).

Its subcellular location is the cytoplasm. The catalysed reaction is a (3S)-3-hydroxyacyl-CoA = a (2E)-enoyl-CoA + H2O. It catalyses the reaction a 4-saturated-(3S)-3-hydroxyacyl-CoA = a (3E)-enoyl-CoA + H2O. It carries out the reaction a (3S)-3-hydroxyacyl-CoA + NAD(+) = a 3-oxoacyl-CoA + NADH + H(+). The enzyme catalyses (3S)-3-hydroxybutanoyl-CoA = (3R)-3-hydroxybutanoyl-CoA. It functions in the pathway lipid metabolism; fatty acid beta-oxidation. In terms of biological role, catalyzes the formation of a hydroxyacyl-CoA by addition of water on enoyl-CoA. Also exhibits 3-hydroxyacyl-CoA epimerase and 3-hydroxyacyl-CoA dehydrogenase activities. This is Fatty acid oxidation complex subunit alpha from Salmonella paratyphi B (strain ATCC BAA-1250 / SPB7).